Reading from the N-terminus, the 228-residue chain is Protein boule (228 aa).

One can recognise an RRM domain in the interval 33 to 110 (NRIFVGGISG…RKLNIAPAIK (78 aa)). The 28-residue stretch at 151 to 178 (PAAGVPAIYPPSAMQYQPFYQYYSVPMN) folds into the DAZ domain. The segment covering 193–214 (PLLHSPTSNPHSPHSQSHPQSP) has biased composition (low complexity). Positions 193–228 (PLLHSPTSNPHSPHSQSHPQSPCWSIEDLRDTLPRV) are disordered. Residues 219–228 (EDLRDTLPRV) show a composition bias toward basic and acidic residues.

It belongs to the RRM DAZ family. Interacts with the translational regulator orb2. As to expression, testis specific.

It localises to the nucleus. It is found in the cytoplasm. In terms of biological role, RNA-binding protein that plays a central role in spermatogenesis. Required for meiotic entry and germline differentiation, at the transition between G2 and M phases of meiosis I. Acts by regulating translation of specific mRNAs, possibly by binding to their 3'-UTR. Essential for translation of twine (twe) mRNA. Required for the expression of various genes such as CG6784, CG17210, CG15841 scpr-B, scpr-C, and rho-6. The protein is Protein boule (bol) of Drosophila melanogaster (Fruit fly).